The sequence spans 78 residues: UPF0154 protein SSU98_1719 (78 aa).

Residues 3-23 (LGLAILLIVLAFAGGVALGIY) form a helical membrane-spanning segment.

It belongs to the UPF0154 family.

It is found in the cell membrane. The protein is UPF0154 protein SSU98_1719 of Streptococcus suis (strain 98HAH33).